A 493-amino-acid polypeptide reads, in one-letter code: Cytoplasmic tRNA 2-thiolation protein 2 (493 aa).

Position 489 is a phosphoserine (serine 489).

It belongs to the CTU2/NCS2 family. As to quaternary structure, interacts with NCS6 and URM1. May act by forming a heterodimer with NCS6.

It localises to the cytoplasm. It participates in tRNA modification; 5-methoxycarbonylmethyl-2-thiouridine-tRNA biosynthesis. In terms of biological role, plays a central role in 2-thiolation of mcm(5)S(2)U at tRNA wobble positions of tRNA(Lys), tRNA(Glu) and tRNA(Gln). May act by forming a heterodimer with NCS6 that ligates sulfur from thiocarboxylated URM1 onto the uridine of tRNAs at wobble position. Prior mcm(5) tRNA modification by the elongator complex is required for 2-thiolation. May also be involved in protein urmylation. This chain is Cytoplasmic tRNA 2-thiolation protein 2, found in Saccharomyces cerevisiae (strain RM11-1a) (Baker's yeast).